The primary structure comprises 445 residues: tRNA-2-methylthio-N(6)-dimethylallyladenosine synthase (445 aa).

Positions 7-121 constitute an MTTase N-terminal domain; the sequence is KTFYIETFGC…LPEMLVQLEA (115 aa). [4Fe-4S] cluster-binding residues include cysteine 16, cysteine 52, cysteine 84, cysteine 158, cysteine 162, and cysteine 165. One can recognise a Radical SAM core domain in the interval 144–374; it reads RDNPHRAYLT…QEKQRAIQIR (231 aa). A TRAM domain is found at 377–443; sequence AEMIGSIQEV…PNSLVGESAA (67 aa).

It belongs to the methylthiotransferase family. MiaB subfamily. Monomer. [4Fe-4S] cluster serves as cofactor.

Its subcellular location is the cytoplasm. It catalyses the reaction N(6)-dimethylallyladenosine(37) in tRNA + (sulfur carrier)-SH + AH2 + 2 S-adenosyl-L-methionine = 2-methylsulfanyl-N(6)-dimethylallyladenosine(37) in tRNA + (sulfur carrier)-H + 5'-deoxyadenosine + L-methionine + A + S-adenosyl-L-homocysteine + 2 H(+). In terms of biological role, catalyzes the methylthiolation of N6-(dimethylallyl)adenosine (i(6)A), leading to the formation of 2-methylthio-N6-(dimethylallyl)adenosine (ms(2)i(6)A) at position 37 in tRNAs that read codons beginning with uridine. In Solibacter usitatus (strain Ellin6076), this protein is tRNA-2-methylthio-N(6)-dimethylallyladenosine synthase.